Here is a 46-residue protein sequence, read N- to C-terminus: Defensin-like protein AX1 (46 aa).

4 disulfides stabilise this stretch: Cys-3–Cys-46, Cys-14–Cys-34, Cys-20–Cys-40, and Cys-24–Cys-42.

Leaves and flowers.

Strong inhibiting activity against C.beticola and other filamentous fungi. Little or no effect against bacteria. The polypeptide is Defensin-like protein AX1 (Beta vulgaris (Sugar beet)).